The primary structure comprises 342 residues: tRNA N6-adenosine threonylcarbamoyltransferase (342 aa).

Fe cation-binding residues include His-111 and His-115. Substrate contacts are provided by residues 134–138 (LVSGG), Asp-167, Gly-180, and Asn-277. Asp-305 contributes to the Fe cation binding site.

It belongs to the KAE1 / TsaD family. It depends on Fe(2+) as a cofactor.

It is found in the cytoplasm. The catalysed reaction is L-threonylcarbamoyladenylate + adenosine(37) in tRNA = N(6)-L-threonylcarbamoyladenosine(37) in tRNA + AMP + H(+). Its function is as follows. Required for the formation of a threonylcarbamoyl group on adenosine at position 37 (t(6)A37) in tRNAs that read codons beginning with adenine. Is involved in the transfer of the threonylcarbamoyl moiety of threonylcarbamoyl-AMP (TC-AMP) to the N6 group of A37, together with TsaE and TsaB. TsaD likely plays a direct catalytic role in this reaction. The sequence is that of tRNA N6-adenosine threonylcarbamoyltransferase from Cellvibrio japonicus (strain Ueda107) (Pseudomonas fluorescens subsp. cellulosa).